The following is a 437-amino-acid chain: Transcriptional modulator WTM1 (437 aa).

Residues Tyr103–Ile144 form a WD 1 repeat. Phosphothreonine is present on Thr187. At Ser200 the chain carries Phosphoserine. 3 WD repeats span residues Pro221–Trp259, Pro264–Thr304, and Ala326–Asn366. Residues Asp368–Arg404 are disordered. A Phosphothreonine modification is found at Thr370. Over residues Arg387 to Gly402 the composition is skewed to basic residues. Phosphothreonine is present on Thr406.

Interacts with KAP122.

The protein resides in the cytoplasm. The protein localises to the nucleus. Transcriptional modulator with roles in meiotic regulation and silencing. Acts either as an adapter to facilitate nuclear import by KAP122 of the RNR2-RNR4 heterodimer, also called beta-beta' subunit, which corresponds to the small subunit of the ribonucleotide reductase (RNR); or as an anchor to retain RNR2-RNR4 in the nucleus. This Saccharomyces cerevisiae (strain ATCC 204508 / S288c) (Baker's yeast) protein is Transcriptional modulator WTM1 (WTM1).